The primary structure comprises 183 residues: MNLWVTGYRSYELGVFNSKDKKVEVIKYALQKKILEKLDEGLEWVITGAQMGIEQWTCEVVAEMKKEYPELKLAIMMPYSEFAGNWNEANQESFSIRCSLADFVGEVSKEKYKSPMQLKNYQNFMLDHTDQAMLIYDPEHEGKTKYDYEMIKKYSEQEDYSYDLVDMYQLQEFAEMYQEKDSF.

The protein belongs to the UPF0398 family.

In Ligilactobacillus salivarius (strain UCC118) (Lactobacillus salivarius), this protein is UPF0398 protein LSL_0930.